We begin with the raw amino-acid sequence, 256 residues long: DNA repair protein RecO (256 aa).

Belongs to the RecO family.

Its function is as follows. Involved in DNA repair and RecF pathway recombination. This Streptococcus pneumoniae serotype 2 (strain D39 / NCTC 7466) protein is DNA repair protein RecO.